The sequence spans 72 residues: Putative sodium channel toxin Ts18 (72 aa).

Residues 1–21 form the signal peptide; the sequence is MNFRFPFLLMITISLIGAVLT. 3 disulfides stabilise this stretch: C38–C61, C47–C66, and C51–C68.

Belongs to the long (3 C-C) scorpion toxin superfamily. Expressed by the venom gland.

It is found in the secreted. Binds to sodium channels (Nav) and affects the channel activation process. In Tityus serrulatus (Brazilian scorpion), this protein is Putative sodium channel toxin Ts18.